Here is a 284-residue protein sequence, read N- to C-terminus: L-ribulose-5-phosphate 3-epimerase UlaE (284 aa).

The protein belongs to the L-ribulose-5-phosphate 3-epimerase family.

The catalysed reaction is L-ribulose 5-phosphate = L-xylulose 5-phosphate. Its pathway is cofactor degradation; L-ascorbate degradation; D-xylulose 5-phosphate from L-ascorbate: step 3/4. Catalyzes the isomerization of L-xylulose-5-phosphate to L-ribulose-5-phosphate. Is involved in the anaerobic L-ascorbate utilization. The polypeptide is L-ribulose-5-phosphate 3-epimerase UlaE (Salmonella choleraesuis (strain SC-B67)).